A 260-amino-acid chain; its full sequence is Peptidase inhibitor 15-A (260 aa).

The signal sequence occupies residues 1–21 (MNENRLAIDILLLCISCGASA). A propeptide spanning residues 22-62 (LAGFSPTASSSLPATNLTDIGFAPPKYLTEAANIPKTRRKR) is cleaved from the precursor. Residues Asn-37 and Asn-126 are each glycosylated (N-linked (GlcNAc...) asparagine). The SCP domain maps to 73-213 (LDYHNKVRGK…KRATYLVCNY (141 aa)).

It belongs to the CRISP family.

The protein resides in the secreted. Functionally, serine protease inhibitor which displays weak inhibitory activity against trypsin. May play a role in facial patterning during embryonic development. The sequence is that of Peptidase inhibitor 15-A (pi15a) from Danio rerio (Zebrafish).